The following is a 131-amino-acid chain: Glycine cleavage system H protein (131 aa).

One can recognise a Lipoyl-binding domain in the interval 24-106 (IATIGISAFA…YGEGWLLKLR (83 aa)). The residue at position 65 (Lys65) is an N6-lipoyllysine.

The protein belongs to the GcvH family. As to quaternary structure, the glycine cleavage system is composed of four proteins: P, T, L and H. It depends on (R)-lipoate as a cofactor.

Its function is as follows. The glycine cleavage system catalyzes the degradation of glycine. The H protein shuttles the methylamine group of glycine from the P protein to the T protein. This is Glycine cleavage system H protein from Gloeothece citriformis (strain PCC 7424) (Cyanothece sp. (strain PCC 7424)).